The primary structure comprises 842 residues: Glycogen phosphorylase, muscle form (842 aa).

Position 2 is an N-acetylserine (Ser2). At Ser15 the chain carries Phosphoserine; by PHK; in form phosphorylase A. Asp43 and Tyr76 together coordinate AMP. Phosphotyrosine occurs at positions 204 and 227. 310 to 319 (RRFKSSKFGC) provides a ligand contact to AMP. Ser430 carries the phosphoserine modification. Tyr473 bears the Phosphotyrosine mark. Lys681 carries the N6-(pyridoxal phosphate)lysine modification. 2 positions are modified to phosphoserine: Ser747 and Ser748.

The protein belongs to the glycogen phosphorylase family. Homodimer. Homotetramer; to form the enzymatically active phosphorylase A. The cofactor is pyridoxal 5'-phosphate. In terms of processing, phosphorylation of Ser-15 converts phosphorylase B (unphosphorylated) to phosphorylase A.

The enzyme catalyses [(1-&gt;4)-alpha-D-glucosyl](n) + phosphate = [(1-&gt;4)-alpha-D-glucosyl](n-1) + alpha-D-glucose 1-phosphate. Allosterically regulated through the non-covalent binding of metabolites, being activated by AMP and inhibited by ATP, ADP, and glucose-6-phosphate. The activity is also controlled by post-translational modifications including phosphorylation. In terms of biological role, allosteric enzyme that catalyzes the rate-limiting step in glycogen catabolism, the phosphorolytic cleavage of glycogen to produce glucose-1-phosphate, and plays a central role in maintaining cellular and organismal glucose homeostasis. This Bos taurus (Bovine) protein is Glycogen phosphorylase, muscle form.